The sequence spans 981 residues: Bifunctional glutamine synthetase adenylyltransferase/adenylyl-removing enzyme (981 aa).

Residues 1–473 (MTMPLPSIEQ…RSVFNNLIGF (473 aa)) form an adenylyl removase region. The tract at residues 479–981 (ADDSDNAWSD…HQIWQKLFFE (503 aa)) is adenylyl transferase.

Belongs to the GlnE family. Requires Mg(2+) as cofactor.

It catalyses the reaction [glutamine synthetase]-O(4)-(5'-adenylyl)-L-tyrosine + phosphate = [glutamine synthetase]-L-tyrosine + ADP. It carries out the reaction [glutamine synthetase]-L-tyrosine + ATP = [glutamine synthetase]-O(4)-(5'-adenylyl)-L-tyrosine + diphosphate. Involved in the regulation of glutamine synthetase GlnA, a key enzyme in the process to assimilate ammonia. When cellular nitrogen levels are high, the C-terminal adenylyl transferase (AT) inactivates GlnA by covalent transfer of an adenylyl group from ATP to specific tyrosine residue of GlnA, thus reducing its activity. Conversely, when nitrogen levels are low, the N-terminal adenylyl removase (AR) activates GlnA by removing the adenylyl group by phosphorolysis, increasing its activity. The regulatory region of GlnE binds the signal transduction protein PII (GlnB) which indicates the nitrogen status of the cell. The sequence is that of Bifunctional glutamine synthetase adenylyltransferase/adenylyl-removing enzyme from Mannheimia succiniciproducens (strain KCTC 0769BP / MBEL55E).